The chain runs to 453 residues: Iron-sulfur cluster assembly SufBD family protein slr0076 (453 aa).

It belongs to the iron-sulfur cluster assembly SufBD family.

The polypeptide is Iron-sulfur cluster assembly SufBD family protein slr0076 (Synechocystis sp. (strain ATCC 27184 / PCC 6803 / Kazusa)).